A 768-amino-acid polypeptide reads, in one-letter code: Tripartite motif-containing protein 67 (768 aa).

The RING-type; degenerate zinc-finger motif lies at 7-42 (CPVCGSLFREPIILPCSHNVCLPCARTIAVQTPDGE). The segment covering 55 to 70 (AAAAATPPDQDAAAGA) has biased composition (low complexity). Disordered stretches follow at residues 55-74 (AAAAATPPDQDAAAGATSGG) and 247-284 (QPPPPPTPPEATPAVTGTSTASSAGGCRSPGGAGASAP). Residues 201-248 (AICQLCDRTPPEPAATLCEQCDVLYCATCQLKCHPSRGPFAKHRLVQP) form a B box-type 1; degenerate zinc finger. The segment covering 247–257 (QPPPPPTPPEA) has biased composition (pro residues). The segment at 285-327 (RKFPTCPEHEMENYSMYCVSCRSPVCYMCLEEGRHSKHEVKPL) adopts a B box-type 2 zinc-finger fold. Cys-290, His-293, Cys-313, and His-319 together coordinate Zn(2+). Positions 332-369 (KQHKAQLSQALNGVSDKAKEAKEFLVQLKNILQQIQEN) form a coiled coil. Residues 435–493 (IKEDDPSGFLQISDALIKRVQTSQEQWVKGALEPKVSAEFDLTLDSEPLLQAIHQLDFV) enclose the COS domain. One can recognise a Fibronectin type-III domain in the interval 498–592 (PPVPLLQLEK…KTVVLQTSDV (95 aa)). The B30.2/SPRY domain maps to 574–765 (NSSGVGPYSK…VPTNLGRPKL (192 aa)).

It is found in the cytoplasm. The protein resides in the cytoskeleton. The protein is Tripartite motif-containing protein 67 (Trim67) of Mus musculus (Mouse).